Here is a 184-residue protein sequence, read N- to C-terminus: NADH-quinone oxidoreductase subunit B (184 aa).

Positions 37, 38, 103, and 132 each coordinate [4Fe-4S] cluster.

The protein belongs to the complex I 20 kDa subunit family. NDH-1 is composed of 14 different subunits. Subunits NuoB, C, D, E, F, and G constitute the peripheral sector of the complex. [4Fe-4S] cluster is required as a cofactor.

The protein localises to the cell membrane. It catalyses the reaction a quinone + NADH + 5 H(+)(in) = a quinol + NAD(+) + 4 H(+)(out). Functionally, NDH-1 shuttles electrons from NADH, via FMN and iron-sulfur (Fe-S) centers, to quinones in the respiratory chain. The immediate electron acceptor for the enzyme in this species is believed to be a menaquinone. Couples the redox reaction to proton translocation (for every two electrons transferred, four hydrogen ions are translocated across the cytoplasmic membrane), and thus conserves the redox energy in a proton gradient. In Mycolicibacterium gilvum (strain PYR-GCK) (Mycobacterium gilvum (strain PYR-GCK)), this protein is NADH-quinone oxidoreductase subunit B.